We begin with the raw amino-acid sequence, 376 residues long: Gibberellic acid methyltransferase 1 (376 aa).

S-adenosyl-L-homocysteine-binding residues include Tyr-22, Cys-64, Asn-69, Asp-104, Leu-105, Ser-136, and Phe-137. Gibberellin A9 is bound at residue Trp-158. Positions 175, 179, 265, 266, 268, and 269 each coordinate Mg(2+).

Belongs to the methyltransferase superfamily. Type-7 methyltransferase family. SABATH subfamily. Requires Mg(2+) as cofactor. In terms of tissue distribution, expressed in siliques, developing seeds, anthers and germinating seeds. Not detected in leaves, stems, flowers and roots.

It catalyses the reaction gibberellin A9 + S-adenosyl-L-methionine = O-methyl gibberellin A9 + S-adenosyl-L-homocysteine. With respect to regulation, up-regulated by K(+) and NH(4+), down-regulated by Zn(2+), Cu(2+), Fe(2+) and Fe(3+). In terms of biological role, methylates the carboxyl group of several gibberellins (GAs). Substrate preference is GA9 &gt; GA20 &gt; GA3 &gt; GA4 &gt; GA34 &gt; GA51 &gt; GA1 &gt; GA19 &gt; GA12. No activity with diterpenes abietic acid and ent-kaurenoic acid. The chain is Gibberellic acid methyltransferase 1 (GAMT1) from Arabidopsis thaliana (Mouse-ear cress).